Consider the following 163-residue polypeptide: Single-stranded DNA-binding protein 2 (163 aa).

Positions Met-1–Glu-104 constitute an SSB domain. Residues Arg-109 to Phe-163 are disordered. Residues Gly-119–Ser-130 show a composition bias toward low complexity. A compositionally biased stretch (polar residues) spans Tyr-131 to Asn-140. The short motif at Asp-158 to Phe-163 is the Important for interaction with partner proteins element.

In terms of assembly, homotetramer.

In terms of biological role, plays an important role in DNA replication, recombination and repair. Binds to ssDNA and to an array of partner proteins to recruit them to their sites of action during DNA metabolism. This Streptococcus pyogenes serotype M6 (strain ATCC BAA-946 / MGAS10394) protein is Single-stranded DNA-binding protein 2 (ssb2).